Reading from the N-terminus, the 281-residue chain is ATP synthase gamma chain (281 aa).

Belongs to the ATPase gamma chain family. In terms of assembly, F-type ATPases have 2 components, CF(1) - the catalytic core - and CF(0) - the membrane proton channel. CF(1) has five subunits: alpha(3), beta(3), gamma(1), delta(1), epsilon(1). CF(0) has three main subunits: a, b and c.

The protein resides in the cell inner membrane. In terms of biological role, produces ATP from ADP in the presence of a proton gradient across the membrane. The gamma chain is believed to be important in regulating ATPase activity and the flow of protons through the CF(0) complex. This Ehrlichia canis (strain Jake) protein is ATP synthase gamma chain.